We begin with the raw amino-acid sequence, 544 residues long: Shootin-1 (544 aa).

Coiled coils occupy residues 17–100 (SNQV…LKRK), 141–184 (IVIT…EKHD), and 259–349 (EALQ…QVSN). The segment at 343–544 (KLQQVSNPPT…TTTICTEQLS (202 aa)) is disordered. The segment covering 352 to 371 (TAAPAPPPPPPPPPPPPPPS) has biased composition (pro residues). Residues 372–383 (SSSSNPLSSLLS) are compositionally biased toward low complexity. Over residues 397 to 412 (LVEKDSSEKSPEKDVR) the composition is skewed to basic and acidic residues. A compositionally biased stretch (pro residues) spans 469 to 479 (SSSPGPRPPSP). Positions 480 to 504 (SEKSELEKALQRRREAVKSAKNNTN) form a coiled coil. Over residues 481–497 (EKSELEKALQRRREAVK) the composition is skewed to basic and acidic residues. Positions 499–544 (AKNNTNPSSVVDLTQIKQTRSEPGQNTGDQETLRHTTTTICTEQLS) are enriched in polar residues.

The protein belongs to the shootin family.

The protein resides in the perikaryon. Its subcellular location is the cell projection. It is found in the axon. It localises to the growth cone. The protein localises to the cytoplasm. The protein resides in the cytoskeleton. Its subcellular location is the filopodium. It is found in the lamellipodium. In terms of biological role, involved in the generation of internal asymmetric signals required for neuronal polarization and neurite outgrowth. The protein is Shootin-1 of Danio rerio (Zebrafish).